The chain runs to 176 residues: ATP synthase subunit b (176 aa).

A helical transmembrane segment spans residues 24–43 (FAFRVVNFVIFAGIIWKAAG).

It belongs to the ATPase B chain family. As to quaternary structure, F-type ATPases have 2 components, F(1) - the catalytic core - and F(0) - the membrane proton channel. F(1) has five subunits: alpha(3), beta(3), gamma(1), delta(1), epsilon(1). F(0) has three main subunits: a(1), b(2) and c(10-14). The alpha and beta chains form an alternating ring which encloses part of the gamma chain. F(1) is attached to F(0) by a central stalk formed by the gamma and epsilon chains, while a peripheral stalk is formed by the delta and b chains.

The protein localises to the cell inner membrane. Its function is as follows. F(1)F(0) ATP synthase produces ATP from ADP in the presence of a proton or sodium gradient. F-type ATPases consist of two structural domains, F(1) containing the extramembraneous catalytic core and F(0) containing the membrane proton channel, linked together by a central stalk and a peripheral stalk. During catalysis, ATP synthesis in the catalytic domain of F(1) is coupled via a rotary mechanism of the central stalk subunits to proton translocation. Component of the F(0) channel, it forms part of the peripheral stalk, linking F(1) to F(0). This is ATP synthase subunit b from Nitratidesulfovibrio vulgaris (strain ATCC 29579 / DSM 644 / CCUG 34227 / NCIMB 8303 / VKM B-1760 / Hildenborough) (Desulfovibrio vulgaris).